Here is a 116-residue protein sequence, read N- to C-terminus: Heme-degrading monooxygenase (116 aa).

The 91-residue stretch at 2–92 (VIVTNTSKIT…EYILENKISF (91 aa)) folds into the ABM domain. Asn6 is a binding site for Fe cation. A heme-binding site is contributed by His76.

The protein belongs to the antibiotic biosynthesis monooxygenase family. Heme-degrading monooxygenase IsdG subfamily. As to quaternary structure, homodimer.

It is found in the cytoplasm. The catalysed reaction is heme b + 3 reduced [NADPH--hemoprotein reductase] + 3 O2 = biliverdin IXalpha + CO + Fe(2+) + 3 oxidized [NADPH--hemoprotein reductase] + 3 H2O + H(+). In terms of biological role, allows bacterial pathogens to use the host heme as an iron source. Catalyzes the oxidative degradation of the heme macrocyclic porphyrin ring to the biliverdin in the presence of a suitable electron donor such as ascorbate or NADPH--cytochrome P450 reductase, with subsequent release of free iron. The polypeptide is Heme-degrading monooxygenase (Halalkalibacterium halodurans (strain ATCC BAA-125 / DSM 18197 / FERM 7344 / JCM 9153 / C-125) (Bacillus halodurans)).